A 314-amino-acid polypeptide reads, in one-letter code: MRGFNKTTVVTQFILVGFSSLGELQLLLFVIFLLLYLTILVANVTIMAVIRFSWTLHTPMYGFLFILSFSESCYTFVIIPQLLVHLLSDTKTISFMACATQLFFFLGFACTNCLLIAVMGYDRYVAICHPLRYTLIINKRLGLELISLSGATGFFIALVATNLICDMRFCGPNRVNHYFCDMAPVIKLACTDTHVKELALFSLSILVIMVPFLLILISYGFIVNTILKIPSAEGKKAFVTCASHLTVVFVHYGCASIIYLRPKSKSASDKDQLVAVTYTVVTPLLNPLVYSLRNKEVKTALKRVLGMPVATKMS.

Residues 1–26 lie on the Extracellular side of the membrane; the sequence is MRGFNKTTVVTQFILVGFSSLGELQL. The N-linked (GlcNAc...) asparagine glycan is linked to asparagine 5. Residues 27-47 traverse the membrane as a helical segment; that stretch reads LLFVIFLLLYLTILVANVTIM. Over 48-55 the chain is Cytoplasmic; the sequence is AVIRFSWT. Residues 56 to 76 form a helical membrane-spanning segment; sequence LHTPMYGFLFILSFSESCYTF. Topologically, residues 77–100 are extracellular; that stretch reads VIIPQLLVHLLSDTKTISFMACAT. A disulfide bond links cysteine 98 and cysteine 190. Residues 101–121 form a helical membrane-spanning segment; the sequence is QLFFFLGFACTNCLLIAVMGY. Topologically, residues 122–140 are cytoplasmic; that stretch reads DRYVAICHPLRYTLIINKR. A helical membrane pass occupies residues 141-161; that stretch reads LGLELISLSGATGFFIALVAT. Over 162–198 the chain is Extracellular; the sequence is NLICDMRFCGPNRVNHYFCDMAPVIKLACTDTHVKEL. The chain crosses the membrane as a helical span at residues 199–218; that stretch reads ALFSLSILVIMVPFLLILIS. Over 219–237 the chain is Cytoplasmic; sequence YGFIVNTILKIPSAEGKKA. The chain crosses the membrane as a helical span at residues 238–258; the sequence is FVTCASHLTVVFVHYGCASII. Over 259–271 the chain is Extracellular; it reads YLRPKSKSASDKD. A helical transmembrane segment spans residues 272–292; it reads QLVAVTYTVVTPLLNPLVYSL. Residues 293–314 are Cytoplasmic-facing; it reads RNKEVKTALKRVLGMPVATKMS.

This sequence belongs to the G-protein coupled receptor 1 family.

It localises to the cell membrane. Functionally, odorant receptor. The sequence is that of Olfactory receptor 10T2 (OR10T2) from Homo sapiens (Human).